Here is a 250-residue protein sequence, read N- to C-terminus: Large ribosomal subunit protein uL29m (250 aa).

K144 carries the post-translational modification N6-acetyllysine.

It belongs to the universal ribosomal protein uL29 family. As to quaternary structure, component of the mitochondrial large ribosomal subunit (mt-LSU). Mature mammalian 55S mitochondrial ribosomes consist of a small (28S) and a large (39S) subunit. The 28S small subunit contains a 12S ribosomal RNA (12S mt-rRNA) and 30 different proteins. The 39S large subunit contains a 16S rRNA (16S mt-rRNA), a copy of mitochondrial valine transfer RNA (mt-tRNA(Val)), which plays an integral structural role, and 52 different proteins.

It is found in the mitochondrion. The sequence is that of Large ribosomal subunit protein uL29m (MRPL47) from Homo sapiens (Human).